We begin with the raw amino-acid sequence, 219 residues long: Proline-rich protein 27 (219 aa).

The first 15 residues, Met1–Ala15, serve as a signal peptide directing secretion. Over residues Ala155 to Ala204 the composition is skewed to low complexity. Positions Ala155 to Gln219 are disordered.

The protein resides in the secreted. The chain is Proline-rich protein 27 (PRR27) from Homo sapiens (Human).